The following is a 447-amino-acid chain: Putative FBD-associated F-box protein At1g61330 (447 aa).

Residues 10–57 (KLIKRLSDELVECILSFLPVQSTLQHRVLSKRYRDTWKLSRDLDFSGI) enclose the F-box domain. The FBD domain maps to 384–416 (VKIIGYKGHWHELDIVEFFVKNAPSLKRLELQM).

The polypeptide is Putative FBD-associated F-box protein At1g61330 (Arabidopsis thaliana (Mouse-ear cress)).